Consider the following 493-residue polypeptide: Transcript termination protein A18 (493 aa).

Residues 100–256 (MIESKRPLYI…NSIINIAKLS (157 aa)) enclose the Helicase ATP-binding domain. 113–120 (LACGFGKT) contacts ATP. A DESH box motif is present at residues 206 to 209 (DESH).

This sequence belongs to the helicase family. Poxviruses subfamily. In terms of assembly, interacts with G2. Might be part of a transcription complex composed at least of G2, A18, and H5.

It is found in the virion. Its function is as follows. DNA helicase which seems to act as a postreplicative transcription termination factor. Involved in ATP-dependent release of nascent RNA. Forms a stable complex with single-stranded DNA, and to a lesser extent RNA. The chain is Transcript termination protein A18 from Rabbitpox virus (strain Utrecht) (RPV).